The primary structure comprises 1324 residues: Sal-like protein 1 (1324 aa).

The interval 1–42 (MSRRKQAKPQHFQSDPEVASLPRRDGDTEKGQPSRPTKSKDA) is disordered. Basic and acidic residues predominate over residues 22 to 42 (PRRDGDTEKGQPSRPTKSKDA). A C2H2-type 1; atypical zinc finger spans residues 43-65 (HVCGRCCAEFFELSDLLLHKKNC). 4 disordered regions span residues 77–102 (NPASPPETFSPSPPPDNPDEQMNDTV), 108–127 (VDCSDLSEHNGLDREESMEV), 132–172 (ANKS…TSAI), and 317–336 (PPIQLPQSSSGNTIIPSNSG). The span at 113 to 124 (LSEHNGLDREES) shows a compositional bias: basic and acidic residues. Over residues 135 to 158 (SGSGTSSGSHSSTAPSSSSSSSSS) the composition is skewed to low complexity. Over residues 321 to 336 (LPQSSSGNTIIPSNSG) the composition is skewed to polar residues. A Glycyl lysine isopeptide (Lys-Gly) (interchain with G-Cter in SUMO2) cross-link involves residue K439. 2 consecutive C2H2-type zinc fingers follow at residues 449 to 471 (HKCRFCAKVFGSDSALQIHLRSH) and 477 to 499 (FKCNICGNRFSTKGNLKVHFQRH). The disordered stretch occupies residues 577–646 (PIPISHSATS…ASSSVLSSPA (70 aa)). S590, S593, and S595 each carry phosphoserine. Over residues 633 to 646 (SVPTASSSVLSSPA) the composition is skewed to low complexity. Glycyl lysine isopeptide (Lys-Gly) (interchain with G-Cter in SUMO2) cross-links involve residues K673, K690, and K701. 3 C2H2-type zinc fingers span residues 706-728 (NECIICHRVLSCQSALKMHYRTH), 734-756 (FKCKICGRAFTTKGNLKTHYSVH), and 766-788 (HSCPICQKKFTNAVVLQQHIRMH). Disordered stretches follow at residues 790 to 856 (GGQI…SSPL) and 894 to 963 (EGDV…LSPT). A compositionally biased stretch (polar residues) spans 802-811 (YSESMESDTG). A compositionally biased stretch (acidic residues) spans 820 to 833 (DLDNFSDENMEDCP). Low complexity predominate over residues 843-856 (SADASQDSLSSSPL). The segment covering 899–936 (TNDSSSVGGDMESQSAGSPAISESTSSMQALSPSNSTQ) has biased composition (polar residues). Residues 937–949 (EFHKSPSIEEKPQ) are compositionally biased toward basic and acidic residues. Phosphoserine occurs at positions 941 and 943. Glycyl lysine isopeptide (Lys-Gly) (interchain with G-Cter in SUMO2) cross-links involve residues K947 and K982. 2 consecutive C2H2-type zinc fingers follow at residues 1001–1023 (TACDICGKTFACQSALDIHYRSH) and 1029–1051 (FICTVCNRGFSTKGNLKQHMLTH). K1086 participates in a covalent cross-link: Glycyl lysine isopeptide (Lys-Gly) (interchain with G-Cter in SUMO2). The disordered stretch occupies residues 1095–1120 (VSPQDSKDTPTSHVPSGPLSSSATSP). Residues 1105 to 1119 (TSHVPSGPLSSSATS) show a composition bias toward polar residues. 2 C2H2-type zinc fingers span residues 1134–1156 (HYCNTCGKTFSSSSALQIHERTH) and 1162–1184 (FACTICGRAFTTKGNLKVHMGTH). Glycyl lysine isopeptide (Lys-Gly) (interchain with G-Cter in SUMO2) cross-links involve residues K1219, K1299, and K1319.

It belongs to the sal C2H2-type zinc-finger protein family. May associate with NuRD histone deacetylase complex (HDAC). Interacts with components of HDAC complex including HDAC1, HDAC2, RBBP4, RBPP7, MTA1 and MTA2. Interacts with CCNQ. Interacts with NSD2 (via PHD-type zinc fingers 1, 2 and 3). As to expression, highest levels in kidney. Lower levels in adult brain (enriched in corpus callosum, lower expression in substantia nigra) and liver.

The protein resides in the nucleus. In terms of biological role, transcriptional repressor involved in organogenesis. Plays an essential role in ureteric bud invasion during kidney development. The sequence is that of Sal-like protein 1 (SALL1) from Homo sapiens (Human).